The sequence spans 327 residues: Transaldolase (327 aa).

K132 functions as the Schiff-base intermediate with substrate in the catalytic mechanism.

Belongs to the transaldolase family. Type 1 subfamily.

It is found in the cytoplasm. The enzyme catalyses D-sedoheptulose 7-phosphate + D-glyceraldehyde 3-phosphate = D-erythrose 4-phosphate + beta-D-fructose 6-phosphate. Its pathway is carbohydrate degradation; pentose phosphate pathway; D-glyceraldehyde 3-phosphate and beta-D-fructose 6-phosphate from D-ribose 5-phosphate and D-xylulose 5-phosphate (non-oxidative stage): step 2/3. Transaldolase is important for the balance of metabolites in the pentose-phosphate pathway. This chain is Transaldolase, found in Chlamydia pneumoniae (Chlamydophila pneumoniae).